A 146-amino-acid chain; its full sequence is Transcriptional regulator MraZ (146 aa).

SpoVT-AbrB domains follow at residues 5 to 48 (TSYH…TLEE) and 77 to 120 (ASEC…SRAK).

Belongs to the MraZ family. Forms oligomers.

Its subcellular location is the cytoplasm. The protein resides in the nucleoid. In Desulfosudis oleivorans (strain DSM 6200 / JCM 39069 / Hxd3) (Desulfococcus oleovorans), this protein is Transcriptional regulator MraZ.